Reading from the N-terminus, the 257-residue chain is Hydroxyethylthiazole kinase (257 aa).

Substrate is bound at residue Met-42. Positions 117 and 163 each coordinate ATP. Residue Ala-190 coordinates substrate.

This sequence belongs to the Thz kinase family. The cofactor is Mg(2+).

It catalyses the reaction 5-(2-hydroxyethyl)-4-methylthiazole + ATP = 4-methyl-5-(2-phosphooxyethyl)-thiazole + ADP + H(+). Its pathway is cofactor biosynthesis; thiamine diphosphate biosynthesis; 4-methyl-5-(2-phosphoethyl)-thiazole from 5-(2-hydroxyethyl)-4-methylthiazole: step 1/1. In terms of biological role, catalyzes the phosphorylation of the hydroxyl group of 4-methyl-5-beta-hydroxyethylthiazole (THZ). This chain is Hydroxyethylthiazole kinase, found in Roseobacter denitrificans (strain ATCC 33942 / OCh 114) (Erythrobacter sp. (strain OCh 114)).